Reading from the N-terminus, the 309-residue chain is MKEKELVVNTKTNGSKSEDVIISISLVKKLRDATGAAMTSCKQALQEAKGDIEEAIKVLRKTNLAQMSSKLQRKADEGIVALAVDNNKGAIIEIKFETDFVARNERLQKLAMEAAQLALVHDNLTDLKNAKLSSGETLESQISQDIAVIGENIQVSRIRQVKLVDNGIIASYIHNSVAPNLGQIAVLVALEGNVESDKLTKLGKNIAMHIAATNPRFLSSNEVPESVIMQEKEIFTAQARTTGKPEKVIEKMIEGRVSKFLEETVLLEQAFVIDGKTKISEVLSNAAKELGSEIKITGFSCLKAGEVVE.

The segment at 98-101 is involved in Mg(2+) ion dislocation from EF-Tu; it reads TDFV.

It belongs to the EF-Ts family.

The protein localises to the cytoplasm. In terms of biological role, associates with the EF-Tu.GDP complex and induces the exchange of GDP to GTP. It remains bound to the aminoacyl-tRNA.EF-Tu.GTP complex up to the GTP hydrolysis stage on the ribosome. This is Elongation factor Ts from Orientia tsutsugamushi (strain Boryong) (Rickettsia tsutsugamushi).